We begin with the raw amino-acid sequence, 174 residues long: Vimentin-type intermediate filament-associated coiled-coil protein (174 aa).

Residues 7 to 97 (LQIREANAHL…DQRDQMIQQL (91 aa)) adopt a coiled-coil conformation. The tract at residues 128 to 174 (GPLPASHSHRAQLLPDGPGPPLGNNMGKEEGQDDQDDQQPAVFGTTV) is disordered.

Its subcellular location is the cytoplasm. The chain is Vimentin-type intermediate filament-associated coiled-coil protein (Vmac) from Mus musculus (Mouse).